Reading from the N-terminus, the 163-residue chain is Nucleotide-binding protein ESA_02876 (163 aa).

This sequence belongs to the YajQ family.

In terms of biological role, nucleotide-binding protein. The sequence is that of Nucleotide-binding protein ESA_02876 from Cronobacter sakazakii (strain ATCC BAA-894) (Enterobacter sakazakii).